Here is an 856-residue protein sequence, read N- to C-terminus: Phospholipase D gamma 2 (856 aa).

One can recognise a C2 domain in the interval 21–161 (PLATSSGSLM…CSGNRIEGLF (141 aa)). Asp223 provides a ligand contact to Ca(2+). The region spanning 362-397 (TIYTHHQKTMIVDAEAAQNRRKIVAFVGGLDLCNGR) is the PLD phosphodiesterase 1 domain. Catalysis depends on residues His367, Lys369, and Asp374. His367 is a binding site for a 1,2-diacyl-sn-glycero-3-phosphate. Ca(2+)-binding residues include His403 and His435. The a 1,2-diacyl-sn-glycero-3-phosphate site is built by Gln562 and His707. A PLD phosphodiesterase 2 domain is found at 702-729 (FMIYVHSKGMVVDDEFVLIGSANINQRS). Residues His707, Lys709, and Asp714 contribute to the active site. Glu770 serves as a coordination point for Ca(2+).

Belongs to the phospholipase D family. C2-PLD subfamily. Ca(2+) is required as a cofactor. In terms of tissue distribution, highly expressed in roots and flowers, moderately in stems, leaves and seedlings and low in siliques. Not detected in seeds.

It localises to the cytoplasm. It is found in the membrane. It carries out the reaction a 1,2-diacyl-sn-glycero-3-phosphocholine + H2O = a 1,2-diacyl-sn-glycero-3-phosphate + choline + H(+). Its activity is regulated as follows. Inhibited by neomycin. Hydrolyzes glycerol-phospholipids at the terminal phosphodiesteric bond to generate phosphatidic acids (PA). Plays an important role in various cellular processes, including phytohormone action, vesicular trafficking, secretion, cytoskeletal arrangement, meiosis, tumor promotion, pathogenesis, membrane deterioration and senescence. Can use phosphatidylserine but prefers ethanolamine-containing lipids as substrates. Can use phosphatidylcholine (PC) as substrates in the presence of phosphatidylethanolamine (PE) and PIP2. Involved in membrane lipid modulation under aluminum (Al) stress and negatively modulate plant tolerance to Al. This is Phospholipase D gamma 2 from Arabidopsis thaliana (Mouse-ear cress).